A 188-amino-acid polypeptide reads, in one-letter code: Elongation factor P-like protein (188 aa).

Belongs to the elongation factor P family.

This is Elongation factor P-like protein from Xylella fastidiosa (strain M12).